The following is a 160-amino-acid chain: Nucleotide-binding protein Ping_2261 (160 aa).

Belongs to the YajQ family.

Its function is as follows. Nucleotide-binding protein. This Psychromonas ingrahamii (strain DSM 17664 / CCUG 51855 / 37) protein is Nucleotide-binding protein Ping_2261.